The sequence spans 164 residues: Arginine repressor (164 aa).

It belongs to the ArgR family.

It is found in the cytoplasm. The protein operates within amino-acid biosynthesis; L-arginine biosynthesis [regulation]. Regulates arginine biosynthesis genes. The chain is Arginine repressor from Thermus thermophilus (strain ATCC BAA-163 / DSM 7039 / HB27).